The chain runs to 100 residues: Urease subunit gamma (100 aa).

It belongs to the urease gamma subunit family. Heterotrimer of UreA (gamma), UreB (beta) and UreC (alpha) subunits. Three heterotrimers associate to form the active enzyme.

The protein localises to the cytoplasm. It carries out the reaction urea + 2 H2O + H(+) = hydrogencarbonate + 2 NH4(+). Its pathway is nitrogen metabolism; urea degradation; CO(2) and NH(3) from urea (urease route): step 1/1. The sequence is that of Urease subunit gamma from Staphylococcus xylosus.